The chain runs to 1082 residues: RNA-directed RNA polymerase (1082 aa).

A RdRp catalytic domain is found at 498–670 (LSYGDVTRYL…ALASLTGCEI (173 aa)).

This sequence belongs to the reoviridae RNA-directed RNA polymerase family. Interacts with VP3 (Potential). Interacts with VP2; this interaction activates VP1. Interacts with NSP5; this interaction is probably necessary for the formation of functional virus factories. Interacts with NSP2; this interaction is weak. Mg(2+) is required as a cofactor.

The protein resides in the virion. It carries out the reaction RNA(n) + a ribonucleoside 5'-triphosphate = RNA(n+1) + diphosphate. Functionally, RNA-directed RNA polymerase that is involved in both transcription and genome replication. Together with VP3 capping enzyme, forms an enzyme complex positioned near the channels situated at each of the five-fold vertices of the core. Following infection, the outermost layer of the virus is lost, leaving a double-layered particle (DLP) made up of the core and VP6 shell. VP1 then catalyzes the transcription of fully conservative plus-strand genomic RNAs that are extruded through the DLP's channels into the cytoplasm where they function as mRNAs for translation of viral proteins. One copy of each of the viral (+)RNAs is also recruited during core assembly, together with newly synthesized polymerase complexes and VP2. The polymerase of these novo-formed particles catalyzes the synthesis of complementary minus-strands leading to dsDNA formation. To do so, the polymerase specifically recognizes conserved 3' sequence(s) in plus-strand RNA templates. Once dsRNA synthesis is complete, the polymerase switches to the transcriptional mode, thus providing secondary transcription. The chain is RNA-directed RNA polymerase from Rotavirus C (strain RVC/Pig/United States/Cowden/1980) (RV-C).